A 351-amino-acid chain; its full sequence is L-threonine 3-dehydrogenase (351 aa).

Cys42 provides a ligand contact to Zn(2+). Residues Thr44 and His47 each act as charge relay system in the active site. Zn(2+) contacts are provided by His67, Glu68, Cys97, Cys100, Cys103, and Cys111. NAD(+) contacts are provided by residues Ile179, Asp199, Arg204, 266–268 (LGL), and 291–292 (IT).

This sequence belongs to the zinc-containing alcohol dehydrogenase family. Homotetramer. The cofactor is Zn(2+).

Its subcellular location is the cytoplasm. It catalyses the reaction L-threonine + NAD(+) = (2S)-2-amino-3-oxobutanoate + NADH + H(+). Its pathway is amino-acid degradation; L-threonine degradation via oxydo-reductase pathway; glycine from L-threonine: step 1/2. In terms of biological role, catalyzes the NAD(+)-dependent oxidation of L-threonine to 2-amino-3-ketobutyrate. This Symbiobacterium thermophilum (strain DSM 24528 / JCM 14929 / IAM 14863 / T) protein is L-threonine 3-dehydrogenase.